A 229-amino-acid chain; its full sequence is Enolase-phosphatase E1 (229 aa).

This sequence belongs to the HAD-like hydrolase superfamily. MasA/MtnC family. Monomer. Requires Mg(2+) as cofactor.

The catalysed reaction is 5-methylsulfanyl-2,3-dioxopentyl phosphate + H2O = 1,2-dihydroxy-5-(methylsulfanyl)pent-1-en-3-one + phosphate. The protein operates within amino-acid biosynthesis; L-methionine biosynthesis via salvage pathway; L-methionine from S-methyl-5-thio-alpha-D-ribose 1-phosphate: step 3/6. Its pathway is amino-acid biosynthesis; L-methionine biosynthesis via salvage pathway; L-methionine from S-methyl-5-thio-alpha-D-ribose 1-phosphate: step 4/6. Functionally, bifunctional enzyme that catalyzes the enolization of 2,3-diketo-5-methylthiopentyl-1-phosphate (DK-MTP-1-P) into the intermediate 2-hydroxy-3-keto-5-methylthiopentenyl-1-phosphate (HK-MTPenyl-1-P), which is then dephosphorylated to form the acireductone 1,2-dihydroxy-3-keto-5-methylthiopentene (DHK-MTPene). This is Enolase-phosphatase E1 from Serratia proteamaculans (strain 568).